The primary structure comprises 727 residues: Glucans biosynthesis glucosyltransferase H (727 aa).

Residues 18–41 (SAMPNERPGAMEPQKLSKMPEGFP) form a disordered region. The next 7 membrane-spanning stretches (helical) occupy residues 58-78 (FLVVGGALLLSLFAIYEMGAV), 97-117 (VNFCWIALAFCSGIAGFLILL), 278-298 (LQQFAARIYGPVIGTGLGWWV), 408-428 (IMAYLSSPFWLMLILTGLMLA), 460-480 (LFYITMGVLFGPKVFGVLLLL), 496-516 (IFSVIFEVILSALIAPIMMFI), and 572-592 (LLAWMSPALIGLWIAVPISAW).

This sequence belongs to the glycosyltransferase 2 family. OpgH subfamily.

The protein resides in the cell inner membrane. It functions in the pathway glycan metabolism; osmoregulated periplasmic glucan (OPG) biosynthesis. Its function is as follows. Involved in the biosynthesis of osmoregulated periplasmic glucans (OPGs). The chain is Glucans biosynthesis glucosyltransferase H from Shewanella baltica (strain OS155 / ATCC BAA-1091).